A 180-amino-acid polypeptide reads, in one-letter code: E3 ubiquitin-protein ligase RNF5 (180 aa).

Ala-2 carries the post-translational modification N-acetylalanine. The RING-type zinc finger occupies 27–68 (CNICLETAREAVVSVCGHLYCWPCLHQWLETRPERQECPVCK). The segment at 79–110 (LYGRGSQKPQDPRLKTPPRPQGQRPAPESRGG) is disordered. Ser-84 carries the phosphoserine modification. Thr-94 carries the phosphothreonine modification. Ser-107 is subject to Phosphoserine. 2 helical membrane-spanning segments follow: residues 118–138 (GGFH…TTVF) and 160–180 (SWQD…LLSI).

It belongs to the RNF5 family. As to quaternary structure, interacts with PXN. Interacts with Salmonella typhimurium sopA. Interacts with JKAMP. Interacts with STING1; the interaction of endogenous proteins is dependent on viral infection. In terms of tissue distribution, widely expressed.

The protein resides in the cell membrane. It localises to the mitochondrion membrane. It is found in the endoplasmic reticulum membrane. It catalyses the reaction S-ubiquitinyl-[E2 ubiquitin-conjugating enzyme]-L-cysteine + [acceptor protein]-L-lysine = [E2 ubiquitin-conjugating enzyme]-L-cysteine + N(6)-ubiquitinyl-[acceptor protein]-L-lysine.. The protein operates within protein modification; protein ubiquitination. Its function is as follows. Membrane-bound E3 ubiquitin-protein ligase that mediates ubiquitination of target proteins. May function together with E2 ubiquitin-conjugating enzymes UBE2D1/UBCH5A and UBE2D2/UBC4. Mediates ubiquitination of PXN/paxillin,thereby regulating cell motility and localization of PXN/paxillin. Catalyzes ubiquitination of Salmonella type III secreted protein sopA. Mediates the 'Lys-63'-linked polyubiquitination of JKAMP thereby regulating JKAMP function by decreasing its association with components of the proteasome and ERAD; the ubiquitination appears to involve E2 ubiquitin-conjugating enzyme UBE2N. Mediates the 'Lys-48'-linked polyubiquitination of STING1 at 'Lys-150' leading to its proteasomal degradation; the ubiquitination occurs in mitochondria after viral transfection and regulates antiviral responses. Catalyzes ubiquitination and subsequent degradation of ATG4B, thereby inhibiting autophagy. This Homo sapiens (Human) protein is E3 ubiquitin-protein ligase RNF5.